An 801-amino-acid polypeptide reads, in one-letter code: Phenylalanine--tRNA ligase beta subunit (801 aa).

The tRNA-binding domain maps to 39–153 (ADGLSKLVVG…EEAVPGDAIF (115 aa)). The region spanning 406–481 (TEPVEVSTSL…RIYGYDKLPT (76 aa)) is the B5 domain. 4 residues coordinate Mg(2+): D459, D465, E468, and E469. The FDX-ACB domain occupies 708-801 (TKFPAMTRDV…LTEQVGAEVR (94 aa)).

This sequence belongs to the phenylalanyl-tRNA synthetase beta subunit family. Type 1 subfamily. Tetramer of two alpha and two beta subunits. The cofactor is Mg(2+).

The protein resides in the cytoplasm. The catalysed reaction is tRNA(Phe) + L-phenylalanine + ATP = L-phenylalanyl-tRNA(Phe) + AMP + diphosphate + H(+). The polypeptide is Phenylalanine--tRNA ligase beta subunit (Streptococcus pyogenes serotype M1).